Reading from the N-terminus, the 283-residue chain is Putative UTP--glucose-1-phosphate uridylyltransferase (283 aa).

It belongs to the UDPGP type 2 family.

It carries out the reaction alpha-D-glucose 1-phosphate + UTP + H(+) = UDP-alpha-D-glucose + diphosphate. The chain is Putative UTP--glucose-1-phosphate uridylyltransferase from Methanocaldococcus jannaschii (strain ATCC 43067 / DSM 2661 / JAL-1 / JCM 10045 / NBRC 100440) (Methanococcus jannaschii).